Reading from the N-terminus, the 225-residue chain is Transmembrane protein 40 (225 aa).

Met1 carries the post-translational modification N-acetylmethionine. Positions 1–14 (MEASGSSSQSQDSG) are enriched in low complexity. The tract at residues 1-96 (MEASGSSSQS…RRDSLRGADH (96 aa)) is disordered. A compositionally biased stretch (basic and acidic residues) spans 15-29 (GVHRETEDHYQETEL). A compositionally biased stretch (basic residues) spans 30 to 39 (HKHHGKARER). A compositionally biased stretch (low complexity) spans 46–68 (SSSSSSSSSSSSSSSSSSSSSSD). The span at 78–87 (GPRKHRRRPR) shows a compositional bias: basic residues. Ser129 is subject to Phosphoserine. 2 helical membrane-spanning segments follow: residues 152–172 (FFHF…YHYY) and 179–199 (LGVG…FGLV).

It is found in the membrane. The chain is Transmembrane protein 40 (Tmem40) from Mus musculus (Mouse).